The chain runs to 332 residues: Putative symporter YfeH (332 aa).

This sequence belongs to the bile acid:sodium symporter (BASS) (TC 2.A.28) family.

In Escherichia coli (strain K12), this protein is Putative symporter YfeH (yfeH).